The sequence spans 445 residues: MEEERRVLFGKYEMGRLLGKGTFAKVYYGKEIIGGECVAIKVINKDQVMKRPGMMEQIKREISIMKLVRHPNIVELKEVMATKTKIFFVMEFVKGGELFCKISKGKLHEDAARRYFQQLISAVDYCHSRGVSHRDLKPENLLLDENGDLKISDFGLSALPEQILQDGLLHTQCGTPAYVAPEVLKKKGYDGAKADIWSCGVVLYVLLAGCLPFQDENLMNMYRKIFRADFEFPPWFSPEARRLISKLLVVDPDRRISIPAIMRTPWLRKNFTPPLAFKIDEPICSQSSKNNEEEEEDGDCENQTEPISPKFFNAFEFISSMSSGFDLSSLFESKRKVQSVFTSRSSATEVMEKIETVTKEMNMKVKRTKDFKVKMEGKTEGRKGRLSMTAEVFEVAPEISVVEFCKSAGDTLEYDRLYEEEVRPALNDIVWSWHGDNNNTSSEDC.

The Protein kinase domain maps to 12–267 (YEMGRLLGKG…IPAIMRTPWL (256 aa)). ATP-binding positions include 18–26 (LGKGTFAKV) and lysine 41. Aspartate 135 serves as the catalytic Proton acceptor. The segment at 153–182 (DFGLSALPEQILQDGLLHTQCGTPAYVAPE) is activation loop. A Phosphoserine modification is found at serine 157. Threonine 171 bears the Phosphothreonine mark. The NAF domain maps to 307–332 (ISPKFFNAFEFISSMSSGFDLSSLFE). The segment at 336-366 (KVQSVFTSRSSATEVMEKIETVTKEMNMKVK) is PPI.

The protein belongs to the protein kinase superfamily. CAMK Ser/Thr protein kinase family. SNF1 subfamily. The cofactor is Mn(2+).

The catalysed reaction is L-seryl-[protein] + ATP = O-phospho-L-seryl-[protein] + ADP + H(+). It carries out the reaction L-threonyl-[protein] + ATP = O-phospho-L-threonyl-[protein] + ADP + H(+). Functionally, CIPK serine-threonine protein kinases interact with CBL proteins. Binding of a CBL protein to the regulatory NAF domain of CIPK protein lead to the activation of the kinase in a calcium-dependent manner. The sequence is that of CBL-interacting serine/threonine-protein kinase 5 (CIPK5) from Arabidopsis thaliana (Mouse-ear cress).